Reading from the N-terminus, the 353-residue chain is Phenol hydroxylase P5 protein (353 aa).

The 2Fe-2S ferredoxin-type domain occupies 3–93; the sequence is YQVTIEPIGT…DMVIEADVDE (91 aa). Positions 37, 42, 45, and 77 each coordinate [2Fe-2S] cluster. The region spanning 102–201 is the FAD-binding FR-type domain; sequence VQDYQATVIE…SGPYGQFFVR (100 aa).

As to quaternary structure, the multicomponent enzyme phenol hydroxylase is formed by P0, P1, P2, P3, P4 and P5 polypeptides. FAD is required as a cofactor. It depends on [2Fe-2S] cluster as a cofactor.

The enzyme catalyses phenol + NADPH + O2 + H(+) = catechol + NADP(+) + H2O. It functions in the pathway aromatic compound metabolism; phenol degradation. Functionally, catabolizes phenol, and some of its methylated derivatives. P5 is required for growth on phenol, and for in vitro phenol hydroxylase activity. In terms of biological role, probable electron transfer from NADPH, via FAD and the 2Fe-2S center, to the oxygenase activity site of the enzyme. The protein is Phenol hydroxylase P5 protein (mphP) of Acinetobacter pittii (strain PHEA-2).